Here is a 257-residue protein sequence, read N- to C-terminus: UPF0246 protein Rsph17029_0026 (257 aa).

It belongs to the UPF0246 family.

In Cereibacter sphaeroides (strain ATCC 17029 / ATH 2.4.9) (Rhodobacter sphaeroides), this protein is UPF0246 protein Rsph17029_0026.